The following is a 1266-amino-acid chain: SUMO-interacting motif-containing protein 1 (1266 aa).

Residues 1 to 35 form a disordered region; sequence MEDFIVISDDSGSESSAGTRSGRARRLRRALSRTP. The span at 22–31 shows a compositional bias: basic residues; the sequence is GRARRLRRAL. The short motif at 45–49 is the SUMO interaction motif 1 (SIM); mediates the binding to polysumoylated substrates element; the sequence is FIDLT. The SUMO interaction motif 2 (SIM); mediates the binding to polysumoylated substrates signature appears at 64 to 68; it reads VIDLT. Low complexity-rich tracts occupy residues 183-197 and 532-553; these read SPFS…SSSN and SSGG…VPQS. 4 disordered regions span residues 183–206, 532–732, 756–812, and 1024–1052; these read SPFS…PCPQ, SSGG…SGDV, NRHS…PGSA, and LTPP…PQPN. The segment covering 560 to 571 has biased composition (polar residues); sequence SPGSVSQSSGDV. The span at 764-777 shows a compositional bias: low complexity; that stretch reads SAPSSPSCSANPLS. Residues 779–1266 form an interaction with SLF2 region; sequence QSEFSSEKRP…NPDTEPASER (488 aa). Residues 857-1266 form a required for inhibition of CAPN3 protease activity region; the sequence is SKGQKLEPIP…NPDTEPASER (410 aa). The NSE5-like domain stretch occupies residues 865–1200; sequence IPHRRLRMVT…IDRKDLIIKR (336 aa).

Forms a heterodimer with SLF2. Interacts (via SIM domains) with SUMO1 and SUMO2. Interacts with CAPN3 and CTBP1. Interacts with SMC6 and ZNF451.

Its subcellular location is the nucleus. It localises to the PML body. Inhibits the protease activity of CAPN3. May play a role in SMC5-SMC6 complex recruitment for viral restriction. Forms a complex with SLF2 and this complex is required to recruit SMC5-SMC6 complex to PML nuclear bodies and sites of viral replication. This chain is SUMO-interacting motif-containing protein 1 (Simc1), found in Rattus norvegicus (Rat).